Consider the following 706-residue polypeptide: Gamma-adducin (706 aa).

Low complexity predominate over residues 1 to 11 (MSSDTSPAVVT). Residues 1–23 (MSSDTSPAVVTTPPPPSMPHKER) are disordered. The residue at position 2 (serine 2) is an N-acetylserine. Phosphoserine is present on residues serine 31, serine 42, serine 64, serine 402, serine 414, serine 423, serine 442, and serine 461. Disordered stretches follow at residues 471 to 495 (AEDSSKVSSGTPIKIEDPNQFVPLN), 534 to 556 (PPSTMQFDDDDQGPPAPPNPFSH), 574 to 610 (QGLDDAEQGSLSDDAASVSQIQSQTQSPQSVPERLEE), and 651 to 706 (TSTT…KVEA). Residue lysine 484 forms a Glycyl lysine isopeptide (Lys-Gly) (interchain with G-Cter in SUMO2) linkage. A phosphoserine mark is found at serine 583, serine 585, and serine 590. Composition is skewed to low complexity over residues 590 to 605 (SVSQIQSQTQSPQSVP) and 651 to 662 (TSTTIENIEITI). Phosphoserine is present on residues serine 673, serine 677, serine 679, serine 681, and serine 683. Over residues 682–706 (PSKKKKKFRTPSFLKKNKKKEKVEA) the composition is skewed to basic residues. Residues 684–701 (KKKKKFRTPSFLKKNKKK) are interaction with calmodulin.

This sequence belongs to the aldolase class II family. Adducin subfamily. Heterodimer of an alpha and a gamma subunit. Post-translationally, sumoylated. In terms of processing, proteolytically cleaved by asparagine endopeptidase (AEP) into 2 fragments. Overexpression of the 1-357 fragment induces neuronal apoptosis, and overexpression of either 1-357 or 358-706 fragment increases the degeneration of dendritic spines. Overexpression of the 1-357 fragment impairs neurite outgrowth by downregulating the expression of Rac2, and induces synaptic dysfunction and cognitive impairments in tau P301S transgenic mice, a mouse model for Alzheimer disease (AD). As to expression, cleavage fragment 1-357 is expressed in the brain and the expression increases with age (at protein level). The fragment is expressed in the cortex, hippocampal CA1 region and hippocampal dentate gyrus in tau P301S transgenic mice, a mouse model for Alzheimer disease (AD) (at protein level). The fragment is only weakly expressed in non-transgenic mouse brain sections (at protein level).

The protein resides in the cytoplasm. The protein localises to the cytoskeleton. It localises to the cell membrane. Its function is as follows. Membrane-cytoskeleton-associated protein that promotes the assembly of the spectrin-actin network. Plays a role in actin filament capping. Binds to calmodulin. Involved in myogenic reactivity of the renal afferent arteriole (Af-art), renal interlobular arteries and middle cerebral artery (MCA) to increased perfusion pressure. Involved in regulation of potassium channels in the vascular smooth muscle cells (VSMCs) of the Af-art and MCA ex vivo. Involved in regulation of glomerular capillary pressure, glomerular filtration rate (GFR) and glomerular nephrin expression in response to hypertension. Involved in renal blood flow (RBF) autoregulation. Plays a role in podocyte structure and function. Regulates globular monomer actin (G-actin) and filamentous polymer actin (F-actin) ratios in the primary podocytes affecting actin cytoskeleton organization. Regulates expression of synaptopodin, RhoA, Rac1 and CDC42 in the renal cortex and the primary podocytes. Regulates expression of nephrin in the glomeruli and in the primary podocytes, expression of nephrin and podocinin in the renal cortex, and expression of focal adhesion proteins integrin alpha-3 and integrin beta-1 in the glomeruli. Involved in cell migration and cell adhesion of podocytes, and in podocyte foot process effacement. Regulates expression of profibrotics markers MMP2, MMP9, TGF beta-1, tubular tight junction protein E-cadherin, and mesenchymal markers vimentin and alpha-SMA. Promotes the growth of neurites. The protein is Gamma-adducin (Add3) of Mus musculus (Mouse).